Here is a 162-residue protein sequence, read N- to C-terminus: 2-C-methyl-D-erythritol 2,4-cyclodiphosphate synthase (162 aa).

A divalent metal cation-binding residues include aspartate 12 and histidine 14. 4-CDP-2-C-methyl-D-erythritol 2-phosphate-binding positions include 12 to 14 (DVH) and 38 to 39 (HS). Histidine 46 provides a ligand contact to a divalent metal cation. 4-CDP-2-C-methyl-D-erythritol 2-phosphate-binding positions include 60-62 (DIG), 136-139 (TTTE), phenylalanine 143, and arginine 146.

Belongs to the IspF family. As to quaternary structure, homotrimer. It depends on a divalent metal cation as a cofactor.

The enzyme catalyses 4-CDP-2-C-methyl-D-erythritol 2-phosphate = 2-C-methyl-D-erythritol 2,4-cyclic diphosphate + CMP. It participates in isoprenoid biosynthesis; isopentenyl diphosphate biosynthesis via DXP pathway; isopentenyl diphosphate from 1-deoxy-D-xylulose 5-phosphate: step 4/6. Functionally, involved in the biosynthesis of isopentenyl diphosphate (IPP) and dimethylallyl diphosphate (DMAPP), two major building blocks of isoprenoid compounds. Catalyzes the conversion of 4-diphosphocytidyl-2-C-methyl-D-erythritol 2-phosphate (CDP-ME2P) to 2-C-methyl-D-erythritol 2,4-cyclodiphosphate (ME-CPP) with a corresponding release of cytidine 5-monophosphate (CMP). This is 2-C-methyl-D-erythritol 2,4-cyclodiphosphate synthase from Porphyromonas gingivalis (strain ATCC 33277 / DSM 20709 / CIP 103683 / JCM 12257 / NCTC 11834 / 2561).